A 261-amino-acid chain; its full sequence is Prostate-specific antigen (261 aa).

The N-terminal stretch at 1 to 17 (MWVPVVFLTLSVTWIGA) is a signal peptide. A propeptide spans 18–24 (APLILSR) (activation peptide). Residues 25 to 258 (IVGGWECEKH…YRKWIKDTIV (234 aa)) enclose the Peptidase S1 domain. 5 disulfides stabilise this stretch: cysteine 31–cysteine 173, cysteine 50–cysteine 66, cysteine 152–cysteine 219, cysteine 184–cysteine 198, and cysteine 209–cysteine 234. The active-site Charge relay system is the histidine 65. N-linked (GlcNAc...) asparagine glycosylation occurs at asparagine 69. Aspartate 120 functions as the Charge relay system in the catalytic mechanism. Serine 213 acts as the Charge relay system in catalysis.

The protein belongs to the peptidase S1 family. Kallikrein subfamily. Forms a heterodimer with SERPINA5.

The protein localises to the secreted. The enzyme catalyses Preferential cleavage: -Tyr-|-Xaa-.. Its activity is regulated as follows. Inhibited by SERPINA5. Activity is strongly inhibited by Zn2+, 100 times more abundant in semen than in serum. This inhibition is relieved by exposure to semenogelins, which are avid zinc binders. Functionally, hydrolyzes semenogelin-1 thus leading to the liquefaction of the seminal coagulum. The sequence is that of Prostate-specific antigen (KLK3) from Homo sapiens (Human).